We begin with the raw amino-acid sequence, 390 residues long: Ankyrin repeat domain-containing protein 63 (390 aa).

ANK repeat units follow at residues 11-40 (AGTRTFLEAMQAGKVHLARFVLDALDRSII), 46-79 (QGRTPLMVAVGLPDPAMRSRFVRLLLEQGAAVNL), 83-112 (RGRTALSLACERGHLDAVQLLVQFSGDPEA), 116-145 (AGNSPVMWAAACGHGAVLEFLVRSFRRLGL), and 153-182 (AGLTALQLAASRGHGTCVQALTGPWGRAAA). 2 disordered regions span residues 181–213 (AAAAAARGSNSDSPPGHPAPAPSPERRRPSPRR) and 226–245 (AGGHGHGHGHGHGHGGELAS). S193 bears the Phosphoserine mark. S304 is subject to Phosphoserine. The tract at residues 320-377 (VGLSPHPEGCPGSGRLGLRRRSTAPDIPSLVGEASGPESGPELENNALPFSVPGPKPW) is disordered.

The sequence is that of Ankyrin repeat domain-containing protein 63 from Mus musculus (Mouse).